The sequence spans 288 residues: Protease HtpX (288 aa).

2 helical membrane-spanning segments follow: residues Ile5–Leu25 and Ser34–Leu54. Residue His140 coordinates Zn(2+). The active site involves Glu141. Residue His144 coordinates Zn(2+). 2 consecutive transmembrane segments (helical) span residues Leu155–Ile175 and Phe190–Ile210. A Zn(2+)-binding site is contributed by Glu219.

It belongs to the peptidase M48B family. Zn(2+) serves as cofactor.

The protein resides in the cell inner membrane. This is Protease HtpX from Stenotrophomonas maltophilia (strain R551-3).